The chain runs to 1320 residues: Immunoglobulin superfamily member 1 (1320 aa).

Positions methionine 1 to glycine 18 are cleaved as a signal peptide. At methionine 19–alanine 504 the chain is on the extracellular side. Ig-like C2-type domains lie at proline 29–glutamate 113, glutamate 115–valine 212, histidine 224–threonine 308, proline 312–asparagine 399, and valine 401–glutamate 482. N-linked (GlcNAc...) asparagine glycosylation is present at asparagine 44. Cysteines 49 and 97 form a disulfide. 3 N-linked (GlcNAc...) asparagine glycosylation sites follow: asparagine 329, asparagine 365, and asparagine 372. Cystine bridges form between cysteine 334-cysteine 383 and cysteine 423-cysteine 466. The chain crosses the membrane as a helical span at residues isoleucine 505–tryptophan 525. Residues lysine 526 to glutamate 534 lie on the Cytoplasmic side of the membrane. Residues alanine 535–cysteine 555 traverse the membrane as a helical segment. At cysteine 556–isoleucine 1320 the chain is on the extracellular side. Ig-like C2-type domains lie at proline 572–aspartate 665, valine 662–isoleucine 756, proline 761–threonine 853, proline 857–threonine 942, threonine 949–valine 1044, proline 1049–asparagine 1134, and proline 1145–aspartate 1226. N-linked (GlcNAc...) asparagine glycans are attached at residues asparagine 591, asparagine 731, asparagine 782, asparagine 830, asparagine 874, asparagine 923, asparagine 970, asparagine 1011, and asparagine 1066. A disulfide bridge connects residues cysteine 783 and cysteine 833. An intrachain disulfide couples cysteine 879 to cysteine 926. A disulfide bridge links cysteine 1071 with cysteine 1118. 2 N-linked (GlcNAc...) asparagine glycosylation sites follow: asparagine 1131 and asparagine 1207. Residues cysteine 1167 and cysteine 1210 are joined by a disulfide bond.

Interacts with INHA; the interaction is not confirmed by standard receptor binding assays. Interacts with ACVR1B; the interaction appears to be ligand-dependent as it is diminished by inhibin B and activin A. Interacts with ACVR2A, ACVR2B, ACVRL1 and BMPR1B. Interacts with HECTD1. Expressed in pituitary gland, testis and liver. Isoform 2 is expressed pituitary gland and testis.

It localises to the membrane. Its subcellular location is the secreted. Functionally, seems to be a coreceptor in inhibin signaling, but seems not to be a high-affinity inhibin receptor. Antagonizes activin A signaling in the presence or absence of inhibin B. Necessary to mediate a specific antagonistic effect of inhibin B on activin-stimulated transcription. The chain is Immunoglobulin superfamily member 1 (Igsf1) from Rattus norvegicus (Rat).